Here is a 404-residue protein sequence, read N- to C-terminus: Probable eukaryotic initiation factor 4A (404 aa).

The disordered stretch occupies residues 1–28 (MAQQGKVEPQDQDSFLDDQPGIRPIPSF). The Q motif motif lies at 26-54 (PSFDDMPLHQNLLRGIYSHGFEKPSSIQQ). The Helicase ATP-binding domain maps to 57–231 (IVPFTRGGDI…KKFMRDPTRI (175 aa)). Position 70–77 (70–77 (AQSGTGKT)) interacts with ATP. Residues 179 to 182 (DEAD) carry the DEAD box motif. The Helicase C-terminal domain maps to 242–402 (GIKQYFIAVE…ELPVDFAAYL (161 aa)).

It belongs to the DEAD box helicase family. eIF4A subfamily. In terms of assembly, eIF4F is a multi-subunit complex, the composition of which varies with external and internal environmental conditions. It is composed of at least EIF4A, EIF4E and EIF4G.

It carries out the reaction ATP + H2O = ADP + phosphate + H(+). Functionally, ATP-dependent RNA helicase which is a subunit of the eIF4F complex involved in cap recognition and is required for mRNA binding to ribosome. In the current model of translation initiation, eIF4A unwinds RNA secondary structures in the 5'-UTR of mRNAs which is necessary to allow efficient binding of the small ribosomal subunit, and subsequent scanning for the initiator codon. The protein is Probable eukaryotic initiation factor 4A of Trypanosoma cruzi (strain CL Brener).